The chain runs to 84 residues: Small ribosomal subunit protein bS18 (84 aa).

The protein belongs to the bacterial ribosomal protein bS18 family. Part of the 30S ribosomal subunit. Forms a tight heterodimer with protein bS6.

Binds as a heterodimer with protein bS6 to the central domain of the 16S rRNA, where it helps stabilize the platform of the 30S subunit. This chain is Small ribosomal subunit protein bS18, found in Helicobacter hepaticus (strain ATCC 51449 / 3B1).